Here is a 98-residue protein sequence, read N- to C-terminus: Protein Frey 1 (98 aa).

The chain crosses the membrane as a helical span at residues 13 to 29 (AGLSLFLHLILAVALLR). Positions 60–87 (YGILPKHPRPRGPRPLLSRAQQRKRDGP) are disordered.

As to quaternary structure, interacts with SPPL2C (via active sites); the interaction stabilizes FREY1 protein and inhibits SPPL2C proteolytic activity. Interacts with IZUMO1; the interaction retains IZUMO1 at the endoplasmic reticulum membrane and coordinates IZUMO1 complex assembly.

The protein resides in the endoplasmic reticulum membrane. Key regulator for male fertility expressed transiently in round spermatids where it recruits IZUMO1 at the endoplasmic reticulum (ER) membrane and coordinates the oolemmal binding multimeric complex (IZUMO1 complex) assembly. Upon complete assembly of the IZUMO1 complex, its ER retention is released, facilitating IZUMO1 complex export to the acrosome. Through the interaction with SPPL2C, inhibits its intramembrane protease activity directly accessing the catalytic center of an I-CLiP. The polypeptide is Protein Frey 1 (Homo sapiens (Human)).